A 289-amino-acid chain; its full sequence is Phosphoribulokinase (289 aa).

12 to 20 (GSSGAGTTT) lines the ATP pocket.

Belongs to the phosphoribulokinase family.

The catalysed reaction is D-ribulose 5-phosphate + ATP = D-ribulose 1,5-bisphosphate + ADP + H(+). Its pathway is carbohydrate biosynthesis; Calvin cycle. The protein is Phosphoribulokinase (cbbP) of Rhizobium meliloti (strain 1021) (Ensifer meliloti).